The chain runs to 465 residues: Hydroxyacid-oxoacid transhydrogenase, mitochondrial (465 aa).

It belongs to the iron-containing alcohol dehydrogenase family. Hydroxyacid-oxoacid transhydrogenase subfamily.

The protein localises to the mitochondrion. The enzyme catalyses (S)-3-hydroxybutanoate + 2-oxoglutarate = (R)-2-hydroxyglutarate + acetoacetate. It catalyses the reaction 4-hydroxybutanoate + 2-oxoglutarate = (R)-2-hydroxyglutarate + succinate semialdehyde. Functionally, catalyzes the cofactor-independent reversible oxidation of gamma-hydroxybutyrate (GHB) to succinic semialdehyde (SSA) coupled to reduction of 2-ketoglutarate (2-KG) to D-2-hydroxyglutarate (D-2-HG). L-3-hydroxybutyrate (L-3-OHB) is also a substrate for HOT when using 2-KG as hydrogen acceptor, resulting in the formation of D-2-HG. This Caenorhabditis elegans protein is Hydroxyacid-oxoacid transhydrogenase, mitochondrial.